Consider the following 159-residue polypeptide: Phosphopantetheine adenylyltransferase (159 aa).

Ser-9 contributes to the substrate binding site. ATP-binding positions include 9 to 10 (SF) and His-17. Positions 41, 73, and 87 each coordinate substrate. ATP contacts are provided by residues 88–90 (GLR), Glu-98, and 123–129 (NIHISSS).

It belongs to the bacterial CoaD family. In terms of assembly, homohexamer. Mg(2+) is required as a cofactor.

It localises to the cytoplasm. It catalyses the reaction (R)-4'-phosphopantetheine + ATP + H(+) = 3'-dephospho-CoA + diphosphate. It participates in cofactor biosynthesis; coenzyme A biosynthesis; CoA from (R)-pantothenate: step 4/5. In terms of biological role, reversibly transfers an adenylyl group from ATP to 4'-phosphopantetheine, yielding dephospho-CoA (dPCoA) and pyrophosphate. In Clostridium beijerinckii (strain ATCC 51743 / NCIMB 8052) (Clostridium acetobutylicum), this protein is Phosphopantetheine adenylyltransferase.